The sequence spans 262 residues: Putative ankyrin repeat protein FPV243 (262 aa).

The stretch at 25 to 54 (YGSTPLFEAICNCSCKNVKLFLENNADINE) is one ANK repeat.

The sequence is that of Putative ankyrin repeat protein FPV243 from Vertebrata (FPV).